The chain runs to 175 residues: 6,7-dimethyl-8-ribityllumazine synthase (175 aa).

Residues Phe24, 58-60, and 82-84 contribute to the 5-amino-6-(D-ribitylamino)uracil site; these read ALE and AVI. (2S)-2-hydroxy-3-oxobutyl phosphate is bound at residue 87-88; that stretch reads ET. Residue His90 is the Proton donor of the active site. Asn115 is a 5-amino-6-(D-ribitylamino)uracil binding site. Arg129 contributes to the (2S)-2-hydroxy-3-oxobutyl phosphate binding site. The interval 151–175 is disordered; the sequence is LEPEEDDEDEDEEDEDFDDEETDRR. Residues 152-175 are compositionally biased toward acidic residues; it reads EPEEDDEDEDEEDEDFDDEETDRR.

The protein belongs to the DMRL synthase family.

It catalyses the reaction (2S)-2-hydroxy-3-oxobutyl phosphate + 5-amino-6-(D-ribitylamino)uracil = 6,7-dimethyl-8-(1-D-ribityl)lumazine + phosphate + 2 H2O + H(+). The protein operates within cofactor biosynthesis; riboflavin biosynthesis; riboflavin from 2-hydroxy-3-oxobutyl phosphate and 5-amino-6-(D-ribitylamino)uracil: step 1/2. In terms of biological role, catalyzes the formation of 6,7-dimethyl-8-ribityllumazine by condensation of 5-amino-6-(D-ribitylamino)uracil with 3,4-dihydroxy-2-butanone 4-phosphate. This is the penultimate step in the biosynthesis of riboflavin. This Bordetella petrii (strain ATCC BAA-461 / DSM 12804 / CCUG 43448) protein is 6,7-dimethyl-8-ribityllumazine synthase.